The sequence spans 21 residues: Trypsin (21 aa).

The propeptide at 1–7 (FPIEEDK) is activation peptide. Residues 8–21 (IVGGYECPKHXVPW) form the Peptidase S1 domain.

This sequence belongs to the peptidase S1 family.

It localises to the secreted. It is found in the extracellular space. It carries out the reaction Preferential cleavage: Arg-|-Xaa, Lys-|-Xaa.. The protein is Trypsin of Protopterus aethiopicus (Marbled lungfish).